Here is a 448-residue protein sequence, read N- to C-terminus: Arginine synthetase ArcE (448 aa).

Probably forms homotetramers and higher assemblies of tetramers. Requires Mg(2+) as cofactor.

It catalyses the reaction L-arginine + ADP + phosphate + H(+) = L-citrulline + NH4(+) + ATP. It participates in amino-acid biosynthesis; L-proline biosynthesis. The protein operates within amino-acid degradation; L-arginine degradation. It functions in the pathway amino-acid biosynthesis; L-arginine biosynthesis. In terms of biological role, arginine deiminase involved in an arginine synthetase pathway, which provides citrulline and ornithine, the precursors for proline biosynthesis. Catalyzes the conversion of L-arginine to citrulline while conserving the energy of arginine deimination to generate ATP from ADP and free phosphate. Is specific toward L-arginine and cannot use D-arginine, agmatine, guanidine, L-alanine-L-arginine dipeptide and L-arginine-L-alanine dipeptide. Can also use CDP, GDP or UDP, with lower activity (38%, 8.4% and 13.3%, respectively). The enzyme can also catalyze the reverse reaction: the ATP-dependent generation of arginine from citrulline in a single reaction by using free ammonia, without the requirement of aspartic acid. In vivo, most likely functions in the arginine catabolism to produce citrulline for proline biosynthesis while also generating ATP, but it can also contribute to arginine biosynthesis when the necessary precursors such as citrulline are abundant. The sequence is that of Arginine synthetase ArcE from Thermococcus kodakarensis (strain ATCC BAA-918 / JCM 12380 / KOD1) (Pyrococcus kodakaraensis (strain KOD1)).